Here is a 384-residue protein sequence, read N- to C-terminus: Small ribosomal subunit protein mS31 (384 aa).

A mitochondrion-targeting transit peptide spans 1-54 (MLHRIPAFLRPRPFSGLPLSCGNRDVSVAVLPAAQSGAVRTENNIQRHFCTSRS). The disordered stretch occupies residues 101–136 (TANVKTPKPRGRKPSASLEATVDRLQKAPEDPPKKR). A compositionally biased stretch (basic and acidic residues) spans 121–136 (TVDRLQKAPEDPPKKR).

The protein belongs to the mitochondrion-specific ribosomal protein mS31 family. Component of the mitochondrial ribosome small subunit (28S) which comprises a 12S rRNA and about 30 distinct proteins.

It is found in the mitochondrion. This Mus musculus (Mouse) protein is Small ribosomal subunit protein mS31 (Mrps31).